The chain runs to 1056 residues: ISWI chromatin-remodeling complex ATPase CHR11 (1056 aa).

Residues 1–10 (MARNSNSDEA) show a composition bias toward low complexity. Disordered regions lie at residues 1–80 (MARN…SKRE) and 133–175 (KSDG…GSGN). Acidic residues-rich tracts occupy residues 11–32 (FSSE…EELE) and 60–73 (PVED…DEEK). The stretch at 12 to 105 (SSEEEEERVK…QEMLESQNAS (94 aa)) forms a coiled coil. Residues 141–151 (KKAKGRGRHAS) are compositionally biased toward basic residues. Positions 155 to 169 (EEEEDEEYLKEEEDG) are enriched in acidic residues. Residues 201 to 366 (IRLYENGING…WALLNFLLPE (166 aa)) enclose the Helicase ATP-binding domain. 214–221 (DEMGLGKT) lines the ATP pocket. The short motif at 317–320 (DEAH) is the DEAH box element. A Helicase C-terminal domain is found at 494–645 (LLDKLLPKLK…ALVIQQGRLA (152 aa)). 2 disordered regions span residues 738–774 (WNDP…PRIP) and 814–833 (IDVE…EVEE). Residues 815-833 (DVEEPEEGGDPLTTEEVEE) are compositionally biased toward acidic residues. SANT domains are found at residues 840–892 (EGFS…ERYK) and 941–1002 (QNKG…DTLI). The tract at residues 1011–1056 (EFDERERQARKEKKLAKSATPSKRPLGRQASESPSSTKKRKHLSMR) is disordered. Residues 1047-1056 (TKKRKHLSMR) are compositionally biased toward basic residues.

It belongs to the SNF2/RAD54 helicase family. ISWI subfamily. As to quaternary structure, interacts with RLT1 and RLT2. Interacts (via C-terminus) with RLT1 (via the DDT domain), RLT2 (via the DDT domain), PTM (via the DDT domain) and DDR4 (via the DDT domain). Binds to FGT1. In terms of tissue distribution, highly expressed in growing tissues such as inflorescence and flower meristems, young leaves and floral organs. Expressed in roots, rosette and cauline leaves, stems, flowers, inflorescences and siliques.

It is found in the nucleus. Its function is as follows. Possesses intrinsic ATP-dependent nucleosome-remodeling activity. Constitutes the catalytic subunit of several complexes capable of forming ordered nucleosome arrays on chromatin. Involved in the formation of nucleosome distribution patterns. Involved in nuclear proliferation during megagametogenesis and cell expansion in the sporophyte. Required for the maintenance of the plant vegetative phase. In association with RLT1 or RLT2 may prevent the early activation of the vegetative-to-reproductive transition by regulating key genes that contribute to flower timing, such as FT, SEP1, SEP3, AGL8/FUL, SOC1 and FLC. Necessary to acquire heat stress (HS) memory. In Arabidopsis thaliana (Mouse-ear cress), this protein is ISWI chromatin-remodeling complex ATPase CHR11.